The chain runs to 234 residues: 2-C-methyl-D-erythritol 4-phosphate cytidylyltransferase (234 aa).

This sequence belongs to the IspD/TarI cytidylyltransferase family. IspD subfamily.

It catalyses the reaction 2-C-methyl-D-erythritol 4-phosphate + CTP + H(+) = 4-CDP-2-C-methyl-D-erythritol + diphosphate. It functions in the pathway isoprenoid biosynthesis; isopentenyl diphosphate biosynthesis via DXP pathway; isopentenyl diphosphate from 1-deoxy-D-xylulose 5-phosphate: step 2/6. Its function is as follows. Catalyzes the formation of 4-diphosphocytidyl-2-C-methyl-D-erythritol from CTP and 2-C-methyl-D-erythritol 4-phosphate (MEP). This is 2-C-methyl-D-erythritol 4-phosphate cytidylyltransferase from Desulforamulus reducens (strain ATCC BAA-1160 / DSM 100696 / MI-1) (Desulfotomaculum reducens).